Here is a 309-residue protein sequence, read N- to C-terminus: Probable ABC transporter permease protein y4oQ (309 aa).

7 helical membrane-spanning segments follow: residues 25-45 (VVWFTMPAAAIMLLVLGVPLV), 89-109 (LIYAVVAVSLECALGILFAVL), 123-143 (LMLIPMVITPAVVGIFWKLLY), 174-194 (VIIVDVWQSTPFFTLIILAGL), 221-241 (LPHLVPYIMIAAAFRIIGVMA), 246-266 (IFLLTLGGPGNVTTTLSVYAY), and 278-298 (TTAISWIYVVFVLAISAPLIW). Positions 85–296 (IRVTLIYAVV…VFVLAISAPL (212 aa)) constitute an ABC transmembrane type-1 domain.

This sequence belongs to the binding-protein-dependent transport system permease family. MalFG subfamily.

It localises to the cell inner membrane. Its function is as follows. Probably part of the binding-protein-dependent transport system y4oPQRS. This system probably transports a sugar-like molecule. Probably responsible for the translocation of the substrate across the membrane. The chain is Probable ABC transporter permease protein y4oQ from Sinorhizobium fredii (strain NBRC 101917 / NGR234).